Reading from the N-terminus, the 414-residue chain is Serine/threonine transporter SstT (414 aa).

A run of 8 helical transmembrane segments spans residues 22–42, 54–74, 89–109, 148–168, 189–209, 223–243, 305–325, and 337–357; these read GLVL…TIGF, IFVK…VMAA, IIVL…IAGF, AIFK…GLAL, IVHV…AETL, LLAV…PILV, MAGA…TLGL, and IVAA…LLLI.

This sequence belongs to the dicarboxylate/amino acid:cation symporter (DAACS) (TC 2.A.23) family.

Its subcellular location is the cell inner membrane. The enzyme catalyses L-serine(in) + Na(+)(in) = L-serine(out) + Na(+)(out). It catalyses the reaction L-threonine(in) + Na(+)(in) = L-threonine(out) + Na(+)(out). In terms of biological role, involved in the import of serine and threonine into the cell, with the concomitant import of sodium (symport system). In Haemophilus influenzae (strain PittEE), this protein is Serine/threonine transporter SstT.